The following is a 422-amino-acid chain: Choline monooxygenase, chloroplastic (422 aa).

The N-terminal 47 residues, 1–47, are a transit peptide targeting the chloroplast; sequence MMTTLTATVPEFLPPSLKSTRGYFNSHSEFGVSISKFSRRRFHNPTR. Residues 96–203 form the Rieske domain; sequence WQAVGYSDQI…VAVWGPFVLL (108 aa). Positions 138, 140, 157, and 160 each coordinate [2Fe-2S] cluster. 2 residues coordinate Fe cation: His-269 and His-274.

This sequence belongs to the choline monooxygenase family. It depends on [2Fe-2S] cluster as a cofactor. Fe cation is required as a cofactor. Requires Mg(2+) as cofactor.

It localises to the plastid. The protein localises to the chloroplast stroma. The catalysed reaction is choline + 2 reduced [2Fe-2S]-[ferredoxin] + O2 + 2 H(+) = betaine aldehyde hydrate + 2 oxidized [2Fe-2S]-[ferredoxin] + H2O. It participates in amine and polyamine biosynthesis; betaine biosynthesis via choline pathway; betaine aldehyde from choline (monooxygenase route): step 1/1. Catalyzes the first step of the osmoprotectant glycine betaine synthesis. The protein is Choline monooxygenase, chloroplastic of Arabidopsis thaliana (Mouse-ear cress).